The primary structure comprises 465 residues: MSGFSLEKFNFVLLFPVLSLLFWAIVLLLLDAFKKLSRNFYIGASIIALFSTLCFLLIYNGFVLDNSHAFFDLFVSDNYAIFAQIVILVFSMLYLLMDKDEQKAEFFSLFLFMIASLILMISSTNLIVIFLALEGSSLALYTLIALRGTHNAISSSIKYFTLAAVGAGFFVFACAFVYLKTKSLDLDNLLHSEYISDPILLCAGVMFLVIVGVKLSIAPFHFWLKDVYYGVHTNFIAFISIVPKIAMIIVVLRIFSALGGGVKFEYIVALLAIFSMLAVSIVALIQKDVKKMLAYSSITHSSFILAVIVSSMSVSSQGDGTSYLLSIFALFVYWISFAFANYGIFLILSLFQKSSFESFSGLFDQRPVLSIMLAIFILCIAGIPPFGIFWGKILILASILNSGYYALVFAVALSSMIMLYAYLKILIYVFFKKAQIVESANLDVKQKIILCLCLIGSVSCVFLLL.

A run of 13 helical transmembrane segments spans residues 9–29 (FNFVLLFPVLSLLFWAIVLLL), 44–64 (ASIIALFSTLCFLLIYNGFVL), 73–93 (LFVSDNYAIFAQIVILVFSML), 110–130 (FLFMIASLILMISSTNLIVIF), 159–179 (YFTLAAVGAGFFVFACAFVYL), 198–218 (PILLCAGVMFLVIVGVKLSIA), 235–255 (FIAFISIVPKIAMIIVVLRIF), 265–285 (EYIVALLAIFSMLAVSIVALI), 292–312 (MLAYSSITHSSFILAVIVSSM), 327–347 (IFALFVYWISFAFANYGIFLI), 371–391 (IMLAIFILCIAGIPPFGIFWG), 405–427 (YALVFAVALSSMIMLYAYLKILI), and 444–464 (VKQKIILCLCLIGSVSCVFLL).

It belongs to the complex I subunit 2 family. As to quaternary structure, NDH-1 is composed of 14 different subunits. Subunits NuoA, H, J, K, L, M, N constitute the membrane sector of the complex.

It is found in the cell inner membrane. The catalysed reaction is a quinone + NADH + 5 H(+)(in) = a quinol + NAD(+) + 4 H(+)(out). NDH-1 shuttles electrons from NADH, via FMN and iron-sulfur (Fe-S) centers, to quinones in the respiratory chain. The immediate electron acceptor for the enzyme in this species is believed to be ubiquinone. Couples the redox reaction to proton translocation (for every two electrons transferred, four hydrogen ions are translocated across the cytoplasmic membrane), and thus conserves the redox energy in a proton gradient. The protein is NADH-quinone oxidoreductase subunit N of Campylobacter lari (strain RM2100 / D67 / ATCC BAA-1060).